The following is a 270-amino-acid chain: High choriolytic enzyme 1 (270 aa).

A signal peptide spans Met1–Ala20. Residues Leu21–Arg70 constitute a propeptide, activation peptide. N-linked (GlcNAc...) asparagine glycosylation occurs at Asn53. Residues Asn71–Arg270 enclose the Peptidase M12A domain. Cystine bridges form between Cys75–Cys80, Cys120–Cys269, and Cys141–Cys161. A Zn(2+)-binding site is contributed by His169. Glu170 is a catalytic residue. Zn(2+) contacts are provided by His173 and His179.

Zn(2+) serves as cofactor.

It is found in the zymogen granule. The enzyme catalyses Hydrolysis of the inner layer of fish egg envelope. Also hydrolysis of casein and small molecule substrates such as succinyl-Leu-Leu-Val-Tyr-|-7-(4-methyl)coumarylamide.. In terms of biological role, participates in the breakdown of the egg envelope, which is derived from the egg extracellular matrix, at the time of hatching. Thus allowing the newly hatched fish to swim free. HCE binds tightly to the egg envelope while it exerts the choriolytic swelling action. This is High choriolytic enzyme 1 (hcea) from Oryzias latipes (Japanese rice fish).